The primary structure comprises 485 residues: Expansin-like protein 8 (485 aa).

The N-terminal stretch at 1-21 is a signal peptide; the sequence is MRISIILLSLLFLSLHSLIKA. Over 22–464 the chain is Extracellular; the sequence is DITKLSVCGS…QSGHHASSNT (443 aa). The region spanning 26–139 is the Expansin-like EG45 domain; it reads LSVCGSARAV…QIVSCGYSGN (114 aa). 2 cysteine pairs are disulfide-bonded: Cys29/Cys70 and Cys73/Cys134. N-linked (GlcNAc...) asparagine glycans are attached at residues Asn117 and Asn365. The disordered stretch occupies residues 408–436; sequence EVNNKPSTTSGTGTTSSKPSSSSGGVSGG. Residues 414-431 show a composition bias toward low complexity; the sequence is STTSGTGTTSSKPSSSSG. Asn454 carries N-linked (GlcNAc...) asparagine glycosylation. Residues 465–485 traverse the membrane as a helical segment; it reads NILLPTTFVFFISITILSLLF.

The protein belongs to the expansin family. Expansin A subfamily.

Its subcellular location is the membrane. Its function is as follows. May serve to lubricate the movement of the cellulose microfibrils during cell growth and wall extension and/or may serve to maintain the fluid state of the slug cell wall. In Dictyostelium discoideum (Social amoeba), this protein is Expansin-like protein 8 (expl8).